A 443-amino-acid polypeptide reads, in one-letter code: Chromosome partition protein MukF (443 aa).

The leucine-zipper stretch occupies residues 209–237 (LDETSGNLRELQDVLNASGDKLQSQLLRI).

Belongs to the MukF family. In terms of assembly, interacts, and probably forms a ternary complex, with MukE and MukB via its C-terminal region. The complex formation is stimulated by calcium or magnesium. It is required for an interaction between MukE and MukB.

The protein resides in the cytoplasm. Its subcellular location is the nucleoid. Involved in chromosome condensation, segregation and cell cycle progression. May participate in facilitating chromosome segregation by condensation DNA from both sides of a centrally located replisome during cell division. Not required for mini-F plasmid partitioning. Probably acts via its interaction with MukB and MukE. Overexpression results in anucleate cells. It has a calcium binding activity. This Glaesserella parasuis serovar 5 (strain SH0165) (Haemophilus parasuis) protein is Chromosome partition protein MukF.